The primary structure comprises 193 residues: Ion-translocating oxidoreductase complex subunit A (193 aa).

6 consecutive transmembrane segments (helical) span residues 5 to 25 (ALLLLSTALVNNVVLVKFLGL), 39 to 59 (LGMGLATTFVITLAAAASWML), 62 to 82 (WLLAPFDLGFLRILSFILVIA), 102 to 122 (SLGIYLPLITTNCAVLGVALL), 134 to 154 (VLFGFGSALGFTLVLLIFAGL), and 172 to 192 (AAFITISLLSLAFMGLSGLVA).

Belongs to the NqrDE/RnfAE family. In terms of assembly, the complex is composed of six subunits: RnfA, RnfB, RnfC, RnfD, RnfE and RnfG.

Its subcellular location is the cell inner membrane. Part of a membrane-bound complex that couples electron transfer with translocation of ions across the membrane. The protein is Ion-translocating oxidoreductase complex subunit A of Aromatoleum aromaticum (strain DSM 19018 / LMG 30748 / EbN1) (Azoarcus sp. (strain EbN1)).